A 667-amino-acid chain; its full sequence is Coiled-coil domain-containing protein 154 (667 aa).

4 coiled-coil regions span residues 76–182 (VVEL…QEAG), 215–302 (RRVD…GQHE), 384–410 (LLREKSRALEASVAQLAGQLKELSGHL), and 457–521 (LRGV…KEDN).

It localises to the early endosome. This chain is Coiled-coil domain-containing protein 154, found in Homo sapiens (Human).